The primary structure comprises 660 residues: Pro-secreted protein ORF2 (660 aa).

The first 19 residues, 1–19, serve as a signal peptide directing secretion; sequence MRPRPILLLLLMFLPMLPA. 2 disordered regions span residues 18-44 and 64-123; these read PAPPPGQPSGRRRGRRSGGSGGGFWGD and PDVT…PPVP. The short motif at 28–33 is the Nuclear localization signal element; the sequence is RRRGRR. The segment covering 92–116 has biased composition (low complexity); the sequence is QRPAAASRRRPTTAGAAPLTAVAPA. 2 N-linked (GlcNAc...) asparagine; by host glycosylation sites follow: N137 and N310. The particle formation stretch occupies residues 368–394; that stretch reads IALTLFNLADTLLGGLPTELISSAGGQ. N562 carries an N-linked (GlcNAc...) asparagine; by host glycan. The interval 585–610 is oligomerization; sequence TTSLGAGPVSISAVAVLAPHSALALL.

Belongs to the hepevirus capsid protein family. Homodimer. In terms of assembly, self-assembles to form the capsid. The capsid is dominated by dimers that define the 30 morphological units. Interacts with phosphorylated protein ORF3. Interacts with host TMEM134. Interacts with host ASGR1 and ASGR2; these interactions facilitate infection of host hepatocytes. In terms of processing, cleaved by host proteases in the N-terminus. N-glycosylated. Post-translationally, not N-glycosylated. The C-terminus of the capsid protein ORF2 is truncated in non-enveloped virions shedded in feces, probably due to host proteases.

It is found in the secreted. It localises to the virion. The protein localises to the host cytoplasm. Its subcellular location is the host endoplasmic reticulum. The protein resides in the host Golgi apparatus. It is found in the host cell surface. It localises to the host nucleus. Its function is as follows. Plays a role in the inhibition of host antibody-mediated neutralization without blocking viral cell entry. In terms of biological role, forms an icosahedral capsid with a T=1 symmetry and a 34 nm diameter. The capsid is composed of 60 copies linked to each other. Binds to the 5' end of the genomic RNA to mediate genome encapsidation. Binds to heparin surface proteoglycans (HSPGs) to mediate viral entry. Additionally, the interactions with host ASGR1 and ASGR2 facilitate viral infection of hepatocytes. Inhibits IFN production by blocking host TBK1-induced IRF3 phosphorylation. The nuclear form probably modulates host gene expression. The sequence is that of Pro-secreted protein ORF2 from Homo sapiens (Human).